Consider the following 1106-residue polypeptide: Inversin (1106 aa).

ANK repeat units lie at residues 13 to 42 (SLASEVHAAAVNGDKSTLLKLIAGNSELKD), 47 to 76 (FGRTPLMYCVLADRVDCAEALLKAGADVNR), 80 to 110 (SRRTALHLAAQKGNYRFMKLLLARRGNWMQK), 113 to 144 (EGMTPLHLTTRHKSPKCLALLLKHMAPGEVDT), 148 to 177 (NKQTALHWSAYYNNPEHVKLLIKHDSNIGI), 181 to 213 (EGKIPLHWAANNKDPSAIHTVKCILEAAPTESL), 220 to 250 (EGRTPLHFAVADGNVAVVDVLTSYEGCNVTS), 254 to 285 (LFRTPLHWAALLGHAQIVHLLLERNKFGTIPS), 288 to 317 (QGATPLHYAAQSNFAETVEVFLKHPSVKDD), 321 to 350 (EGRTSFMWAAGKGSDNVIRTMLDLKLDIDI), 356 to 385 (YAGTALHAAALSGHVSTVKLLLERNAQVDA), 389 to 418 (MKHTPLFRACEMGHKEVIQTLIKGGARVDL), 422 to 451 (DGHSPLHWAALGGNADVCQILIENKINPNV), 455 to 484 (AGRTPLQCAAYGGYINCMVVLLENNADPNI), 488 to 517 (EGRTALHWLCNNGYLDAIKLLLGFDAFPNH), and 523 to 553 (ERYTPLDYALLGEHHEVIQFMLEHGALSIAA). The D-box 1 motif lies at 490–498 (RTALHWLCN). One can recognise an IQ 1 domain in the interval 555–584 (QDIAAFKIQAVYKGYKVRKAFQERKNLLMK). Positions 589–607 (RKDAAAKKREEESKRKEAS) are enriched in basic and acidic residues. Disordered stretches follow at residues 589–615 (RKDAAAKKREEESKRKEASLQKGMQNM), 636–688 (LQLS…ELQS), 746–782 (ANGTSAHGNRRHASACGTAGAGEKTRDQSLSSSGNRG), and 809–833 (AVPKSKRHQQKSRHKEVNYERCSPA). 2 stretches are compositionally biased toward polar residues: residues 636-645 (LQLSNKQTDL) and 653-666 (VSASQIQLGRNSRG). Residues 812-822 (KSKRHQQKSRH) show a composition bias toward basic residues. The D-box 2 signature appears at 944–952 (RKELFRKKN). In terms of domain architecture, IQ 2 spans 951–980 (KNYAATVIQRTWRSYRLRQELSQLLSAKRQ).

In terms of assembly, binds calmodulin via its IQ domains. Interacts with APC2.

It localises to the cytoplasm. The protein resides in the cytoskeleton. Required for normal renal development and establishment of left-right axis. Probably acts as a molecular switch between different Wnt signaling pathways. Inhibits the canonical Wnt pathway by targeting cytoplasmic disheveled for degradation by the ubiquitin-proteasome. This suggests that it is required in renal development to oppose the repression of terminal differentiation of tubular epithelial cells by Wnt signaling. This Gallus gallus (Chicken) protein is Inversin (INVS).